Consider the following 161-residue polypeptide: Nucleoside diphosphate kinase (161 aa).

ATP-binding residues include K12, F60, R88, T94, and R105. H121 functions as the Pros-phosphohistidine intermediate in the catalytic mechanism.

It belongs to the NDK family. The cofactor is Mg(2+).

It is found in the cytoplasm. The enzyme catalyses a 2'-deoxyribonucleoside 5'-diphosphate + ATP = a 2'-deoxyribonucleoside 5'-triphosphate + ADP. The catalysed reaction is a ribonucleoside 5'-diphosphate + ATP = a ribonucleoside 5'-triphosphate + ADP. Major role in the synthesis of nucleoside triphosphates other than ATP. The ATP gamma phosphate is transferred to the NDP beta phosphate via a ping-pong mechanism, using a phosphorylated active-site intermediate. This Pyrococcus furiosus (strain ATCC 43587 / DSM 3638 / JCM 8422 / Vc1) protein is Nucleoside diphosphate kinase.